We begin with the raw amino-acid sequence, 460 residues long: Protein unc-93 homolog A (460 aa).

5 helical membrane passes run 7-27, 41-61, 68-88, 89-109, and 139-159; these read ILIV…LQSL, SLSV…PIVI, WTIV…FYAS, WYTL…LWAA, and LFFL…SLIF. N-linked (GlcNAc...) asparagine glycosylation is found at Asn168 and Asn189. Transmembrane regions (helical) follow at residues 203-223, 292-312, 321-341, 345-365, 390-410, and 412-432; these read TLLG…AVFL, FVGY…LLFG, ICLF…LLLW, PNDF…DAIW, LWES…CVSV, and LYIL…VEYL.

It belongs to the unc-93 family.

It is found in the membrane. This chain is Protein unc-93 homolog A (unc93a), found in Xenopus laevis (African clawed frog).